Consider the following 276-residue polypeptide: Probable endonuclease 4 (276 aa).

Residues H67, H107, E142, D176, H179, H211, D224, H226, and E256 each coordinate Zn(2+).

Belongs to the AP endonuclease 2 family. Zn(2+) serves as cofactor.

The catalysed reaction is Endonucleolytic cleavage to 5'-phosphooligonucleotide end-products.. Endonuclease IV plays a role in DNA repair. It cleaves phosphodiester bonds at apurinic or apyrimidinic (AP) sites, generating a 3'-hydroxyl group and a 5'-terminal sugar phosphate. This Methanosphaera stadtmanae (strain ATCC 43021 / DSM 3091 / JCM 11832 / MCB-3) protein is Probable endonuclease 4.